Consider the following 527-residue polypeptide: UDP-glucuronosyltransferase 2A1 (527 aa).

The first 20 residues, 1–20 (MLKNILLWSLQLSLLGMSLG), serve as a signal peptide directing secretion. The Extracellular portion of the chain corresponds to 21–490 (GNVLIWPMEG…LSWFQYHSLD (470 aa)). Asn-49 is a glycosylation site (N-linked (GlcNAc...) asparagine). Position 134 is an N6-succinyllysine (Lys-134). Asn-313 is a glycosylation site (N-linked (GlcNAc...) asparagine). Residues 491 to 507 (VIGFLLACMASAILLVI) form a helical membrane-spanning segment. The Cytoplasmic segment spans residues 508 to 527 (KCCLFVFQKIGKTXKKNKRD).

Belongs to the UDP-glycosyltransferase family. As to expression, olfactory epithelium. Mainly found in the sustentacular cells and to a lesser extent in Bowman's gland cells. Also expressed in the olfactory sensory neuron nuclei. Neuronal localization within the olfactory bulb is mainly found in the deeper granular cells.

It is found in the membrane. The catalysed reaction is glucuronate acceptor + UDP-alpha-D-glucuronate = acceptor beta-D-glucuronoside + UDP + H(+). It catalyses the reaction 16beta,17beta-estriol + UDP-alpha-D-glucuronate = 16beta,17beta-estriol 16-O-(beta-D-glucuronate) + UDP + H(+). The enzyme catalyses 16alpha,17alpha-estriol + UDP-alpha-D-glucuronate = 16alpha,17alpha-estriol 16-O-(beta-D-glucuronate) + UDP + H(+). It carries out the reaction 17alpha-estradiol + UDP-alpha-D-glucuronate = 17alpha-estradiol 17-O-(beta-D-glucuronate) + UDP + H(+). The catalysed reaction is 17alpha-estradiol + UDP-alpha-D-glucuronate = 17alpha-estradiol 3-O-(beta-D-glucuronate) + UDP + H(+). It catalyses the reaction 17beta-estradiol + UDP-alpha-D-glucuronate = 17beta-estradiol 3-O-(beta-D-glucuronate) + UDP + H(+). The enzyme catalyses 17beta-estradiol + UDP-alpha-D-glucuronate = 17beta-estradiol 17-O-(beta-D-glucuronate) + UDP + H(+). It carries out the reaction testosterone + UDP-alpha-D-glucuronate = testosterone 17-O-(beta-D-glucuronate) + UDP + H(+). The catalysed reaction is epitestosterone + UDP-alpha-D-glucuronate = epitestosterone 17-O-(beta-D-glucuronate) + UDP + H(+). It catalyses the reaction lithocholate + UDP-alpha-D-glucuronate = lithocholoyl-3-O-(beta-D-glucuronate) + UDP + H(+). The enzyme catalyses lithocholate + UDP-alpha-D-glucuronate = lithocholoyl-24-O-(beta-D-glucuronate) + UDP. It carries out the reaction deoxycholate + UDP-alpha-D-glucuronate = deoxycholoyl-24-O-(beta-D-glucuronate) + UDP. The catalysed reaction is hyodeoxycholate + UDP-alpha-D-glucuronate = hyodeoxycholate 6-O-(beta-D-glucuronate) + UDP + H(+). It catalyses the reaction hyocholate + UDP-alpha-D-glucuronate = hyocholoyl-24-O-(beta-D-glucuronate) + UDP. Its function is as follows. UDP-glucuronosyltransferase (UGT) that catalyzes phase II biotransformation reactions in which lipophilic substrates are conjugated with glucuronic acid to increase the metabolite's water solubility, thereby facilitating excretion into either the urine or bile. Essential for the elimination and detoxification of drugs, xenobiotics and endogenous compounds. Catalyzes the glucuronidation of endogenous steroid hormones such as androgens (testosterones) and estrogens (estradiol and estriol). Contributes to bile acid (BA) detoxification by catalyzing the glucuronidation of BA substrates, which are natural detergents for dietary lipids absorption. Shows a high affinity to aliphatic odorants such as citronellol as well as olfactory tissue specificity, and therefore may be involved in olfaction. This chain is UDP-glucuronosyltransferase 2A1, found in Rattus norvegicus (Rat).